The following is a 346-amino-acid chain: NADH-ubiquinone oxidoreductase chain 2 (346 aa).

Helical transmembrane passes span 1-21 (MNPH…TITI), 25-45 (HWVL…PLIS), 60-80 (FLTQ…NAWA), 95-115 (CLLL…HFWF), 124-144 (LMTA…LLLM), 149-169 (LNPA…GWMG), 178-195 (ILAF…IILV), 200-219 (LALL…FMAL), 242-262 (ATLM…GFMP), 274-294 (EMTP…FFYL), and 326-346 (AILA…HAIV).

The protein belongs to the complex I subunit 2 family.

The protein localises to the mitochondrion inner membrane. The enzyme catalyses a ubiquinone + NADH + 5 H(+)(in) = a ubiquinol + NAD(+) + 4 H(+)(out). Its function is as follows. Core subunit of the mitochondrial membrane respiratory chain NADH dehydrogenase (Complex I) that is believed to belong to the minimal assembly required for catalysis. Complex I functions in the transfer of electrons from NADH to the respiratory chain. The immediate electron acceptor for the enzyme is believed to be ubiquinone. The polypeptide is NADH-ubiquinone oxidoreductase chain 2 (MT-ND2) (Mareca penelope (Eurasian wigeon)).